The sequence spans 461 residues: ATP synthase subunit beta (461 aa).

151–158 (GGAGVGKT) is an ATP binding site.

The protein belongs to the ATPase alpha/beta chains family. In terms of assembly, F-type ATPases have 2 components, CF(1) - the catalytic core - and CF(0) - the membrane proton channel. CF(1) has five subunits: alpha(3), beta(3), gamma(1), delta(1), epsilon(1). CF(0) has three main subunits: a(1), b(2) and c(9-12). The alpha and beta chains form an alternating ring which encloses part of the gamma chain. CF(1) is attached to CF(0) by a central stalk formed by the gamma and epsilon chains, while a peripheral stalk is formed by the delta and b chains.

It localises to the cell inner membrane. It catalyses the reaction ATP + H2O + 4 H(+)(in) = ADP + phosphate + 5 H(+)(out). Its function is as follows. Produces ATP from ADP in the presence of a proton gradient across the membrane. The catalytic sites are hosted primarily by the beta subunits. In Colwellia psychrerythraea (strain 34H / ATCC BAA-681) (Vibrio psychroerythus), this protein is ATP synthase subunit beta.